The following is a 1183-amino-acid chain: RecQ-like DNA helicase BLM (1183 aa).

The interval 1–109 (MEEARAATNG…AAEQDSSAEH (109 aa)) is disordered. The segment covering 14–27 (ESQKLSNGEKSSQL) has biased composition (polar residues). Residues 38–48 (ADIELEEDDYL) show a composition bias toward acidic residues. A necessary for dimerization and homooligomerization region spans residues 110-162 (ADKGLHLEQQLYSVMEDICKLVDAIPLHELTSISCAKELLQQRELRRKLLADS). 3 disordered regions span residues 164–215 (ALNT…LPSV), 260–323 (PKVN…GCWD), and 381–408 (GSAPGPHPTAPKSGCGISAKSSSEPLVH). Polar residues-rich tracts occupy residues 206–215 (TPKSTNLPSV) and 265–280 (KGSTSLSRPSEASFNG). ATP is bound by residues 439–443 (FRTNQ) and 463–467 (GGGKS). A Helicase ATP-binding domain is found at 447-622 (INAALLGEDC…QNQLEMLKPQ (176 aa)). Residues 566 to 569 (DEAH) carry the DEAH box motif. 3' overhang DNA-binding stretches follow at residues 641–644 (KPKK) and 668–670 (SRH). Positions 648–795 (DCLEWIKKYH…TRQTHFNNLY (148 aa)) constitute a Helicase C-terminal domain. Position 753 (arginine 753) interacts with ATP. The tract at residues 771 to 774 (RLRR) is 3' overhang DNA-binding. Zn(2+)-binding residues include cysteine 807, cysteine 826, cysteine 834, and cysteine 837. The segment at 865-910 (QVGGINGNRNTGSGRYTLNMMVDIFLGAKSAKIQSGIFGKGAAYSR) is DNA Holliday junction binding. 3' overhang DNA-binding stretches follow at residues 881-883 (TLN), 892-896 (AKSAK), and 931-937 (YITANDQ). Residues 983-1063 (EEMVKKCLGE…DKYSEWTTPE (81 aa)) enclose the HRDC domain. The tract at residues 998-1015 (KTLGKIFDVHYFNIFSTS) is necessary for ssDNA and DNA Holliday junction binding. The disordered stretch occupies residues 1068-1183 (QSVDTAPGSA…HFLQPSYAVL (116 aa)). Positions 1091 to 1101 (VTSSYFGGNAN) are enriched in polar residues. The Nuclear localization signal motif lies at 1104–1120 (RKRKRLPNSGESKRKKT). Residues 1133-1142 (ARYRRARRAP) show a composition bias toward basic residues. Low complexity predominate over residues 1143–1158 (GSRAAAPAQSSALRGA).

It belongs to the helicase family. RecQ subfamily. In terms of assembly, monomer. Homodimer (via N-terminus). Homotetramer (via N-terminus); dimer of dimers. Homohexamer (via N-terminus). Self-association negatively regulates DNA unwinding amplitude and rate. Oligomer complexes dissociate into monomer in presence of ATP. Requires Zn(2+) as cofactor.

It is found in the nucleus. It catalyses the reaction Couples ATP hydrolysis with the unwinding of duplex DNA by translocating in the 3'-5' direction.. The catalysed reaction is ATP + H2O = ADP + phosphate + H(+). Its function is as follows. ATP-dependent DNA helicase that unwinds single- and double-stranded DNA in a 3'-5' direction. Participates in DNA replication and repair. Involved in 5'-end resection of DNA during double-strand break (DSB) repair. Negatively regulates sister chromatid exchange (SCE). Stimulates DNA 4-way junction branch migration and DNA Holliday junction dissolution. Binds DNA. Binds single-stranded DNA (ssDNA), forked duplex DNA and DNA Holliday junction. The chain is RecQ-like DNA helicase BLM (BLM) from Gallus gallus (Chicken).